Here is a 153-residue protein sequence, read N- to C-terminus: MRCPSCHHSGTRVLESRPVEEGRSIRRRRECEQCHYRFTTFERIEEPPLIVVKKEGTREEFSREKILRGLIKACEKRPVALEELEKVTQEIERELRNQGVSEVKSETIGEMVMERLSHIDEVAYVRFASVYRQFKDINVFIEELKELIKKGQR.

A zinc finger lies at 3 to 34 (CPSCHHSGTRVLESRPVEEGRSIRRRRECEQC). Residues 49-139 (LIVVKKEGTR…VYRQFKDINV (91 aa)) form the ATP-cone domain.

The protein belongs to the NrdR family. Zn(2+) is required as a cofactor.

Negatively regulates transcription of bacterial ribonucleotide reductase nrd genes and operons by binding to NrdR-boxes. This chain is Transcriptional repressor NrdR, found in Geobacillus kaustophilus (strain HTA426).